Consider the following 513-residue polypeptide: ATP synthase subunit alpha (513 aa).

171–178 (GDRQIGKT) contributes to the ATP binding site.

The protein belongs to the ATPase alpha/beta chains family. In terms of assembly, F-type ATPases have 2 components, CF(1) - the catalytic core - and CF(0) - the membrane proton channel. CF(1) has five subunits: alpha(3), beta(3), gamma(1), delta(1), epsilon(1). CF(0) has three main subunits: a(1), b(2) and c(9-12). The alpha and beta chains form an alternating ring which encloses part of the gamma chain. CF(1) is attached to CF(0) by a central stalk formed by the gamma and epsilon chains, while a peripheral stalk is formed by the delta and b chains.

It is found in the cell membrane. The catalysed reaction is ATP + H2O + 4 H(+)(in) = ADP + phosphate + 5 H(+)(out). Produces ATP from ADP in the presence of a proton gradient across the membrane. The alpha chain is a regulatory subunit. This chain is ATP synthase subunit alpha, found in Wolbachia pipientis wMel.